A 169-amino-acid chain; its full sequence is Peptide deformylase (169 aa).

Residues cysteine 91 and histidine 133 each contribute to the Fe cation site. Glutamate 134 is a catalytic residue. Residue histidine 137 coordinates Fe cation.

Belongs to the polypeptide deformylase family. Fe(2+) is required as a cofactor.

The catalysed reaction is N-terminal N-formyl-L-methionyl-[peptide] + H2O = N-terminal L-methionyl-[peptide] + formate. Removes the formyl group from the N-terminal Met of newly synthesized proteins. Requires at least a dipeptide for an efficient rate of reaction. N-terminal L-methionine is a prerequisite for activity but the enzyme has broad specificity at other positions. The sequence is that of Peptide deformylase from Hydrogenovibrio crunogenus (strain DSM 25203 / XCL-2) (Thiomicrospira crunogena).